We begin with the raw amino-acid sequence, 496 residues long: 3-octaprenyl-4-hydroxybenzoate carboxy-lyase (496 aa).

Asparagine 181 contacts Mn(2+). Prenylated FMN contacts are provided by residues 184–186 (IYR), 198–200 (RWL), and 203–204 (RG). Residue glutamate 247 participates in Mn(2+) binding. Catalysis depends on aspartate 296, which acts as the Proton donor.

It belongs to the UbiD family. Homohexamer. Prenylated FMN serves as cofactor. The cofactor is Mn(2+).

It is found in the cell membrane. It catalyses the reaction a 4-hydroxy-3-(all-trans-polyprenyl)benzoate + H(+) = a 2-(all-trans-polyprenyl)phenol + CO2. It functions in the pathway cofactor biosynthesis; ubiquinone biosynthesis. Functionally, catalyzes the decarboxylation of 3-octaprenyl-4-hydroxy benzoate to 2-octaprenylphenol, an intermediate step in ubiquinone biosynthesis. This chain is 3-octaprenyl-4-hydroxybenzoate carboxy-lyase, found in Aromatoleum aromaticum (strain DSM 19018 / LMG 30748 / EbN1) (Azoarcus sp. (strain EbN1)).